A 330-amino-acid polypeptide reads, in one-letter code: Olfactory receptor 5P73 (330 aa).

The Extracellular portion of the chain corresponds to 1 to 28 (MAFLEDGNHTTVTEFFLLGLTDDPVLRD). N8 is a glycosylation site (N-linked (GlcNAc...) asparagine). The helical transmembrane segment at 29-49 (ILFIIILCIYLVTVSGNLSTI) threads the bilayer. The Cytoplasmic portion of the chain corresponds to 50–57 (LLIRVSSQ). The chain crosses the membrane as a helical span at residues 58-78 (LHHPMYFILSHLASVDIGISS). The Extracellular portion of the chain corresponds to 79-102 (SVTPNMLATFLVKQNTISYIGCSI). C100 and C192 form a disulfide bridge. Residues 103 to 123 (QFTSAAFFGTVECFLLATMAY) traverse the membrane as a helical segment. Topologically, residues 124–136 (DRFVAICNPLLYS) are cytoplasmic. Residues 137 to 157 (TKMSTEACIQLVVGSYIQGFL) form a helical membrane-spanning segment. Residues 158–199 (NASFFTLSFFSLFFCGPNRINDFYCDFAPLLELSCSDVTVAV) lie on the Extracellular side of the membrane. The helical transmembrane segment at 200–220 (VITSISAGFITLTTVFVIAIS) threads the bilayer. The Cytoplasmic portion of the chain corresponds to 221 to 240 (YSCIFITIMKMHSTESRCKA). Residues 241–261 (FSTCTSHLTAVILFYGTAIFI) traverse the membrane as a helical segment. The Extracellular segment spans residues 262–274 (YVMPKSSYSTDQN). Residues 275-295 (KVLSIFYTVVIPMLNPLIYSL) form a helical membrane-spanning segment. Residues 296–330 (RNNEIKEALKRHLGKKVFSYGNLFCKTHYNHNYPV) lie on the Cytoplasmic side of the membrane.

The protein belongs to the G-protein coupled receptor 1 family.

It is found in the cell membrane. Functionally, potential odorant receptor. The chain is Olfactory receptor 5P73 from Mus musculus (Mouse).